Reading from the N-terminus, the 218-residue chain is Octanoyltransferase (218 aa).

In terms of domain architecture, BPL/LPL catalytic spans 31–206; it reads REAGDEVWLV…QLVKHLDYAE (176 aa). Residues 70 to 77, 137 to 139, and 150 to 152 contribute to the substrate site; these read RGGQVTYH, SLG, and GLA. Residue C168 is the Acyl-thioester intermediate of the active site.

This sequence belongs to the LipB family.

Its subcellular location is the cytoplasm. The catalysed reaction is octanoyl-[ACP] + L-lysyl-[protein] = N(6)-octanoyl-L-lysyl-[protein] + holo-[ACP] + H(+). The protein operates within protein modification; protein lipoylation via endogenous pathway; protein N(6)-(lipoyl)lysine from octanoyl-[acyl-carrier-protein]: step 1/2. Catalyzes the transfer of endogenously produced octanoic acid from octanoyl-acyl-carrier-protein onto the lipoyl domains of lipoate-dependent enzymes. Lipoyl-ACP can also act as a substrate although octanoyl-ACP is likely to be the physiological substrate. This is Octanoyltransferase from Pseudomonas syringae pv. tomato (strain ATCC BAA-871 / DC3000).